Consider the following 434-residue polypeptide: MMADTEMQEQDVPSGTKGVVEEPSELEKDLNSIERPKSPVPEDTTHTLDSDVHLSDAPIANQIEANEEVGGQNSVDGRNGDVDQSEKKITSDGGQEETTLGESNPLKGDPSSPHVPEESVKKWKTWLLSDAEAREVDEAGAPQDQEAFIKEVEAFNKENFLEFKAPKFYGQPLNCLKLWRAVIKLGGYDVVTTSKLWRQVGESFHPPKTCTTVSWTFRIFYEKALLEYEKHLRQNGELNLPGSASLPSSGIEKEASSHQASGSGRTRRDAAARAMQGWHSQRLLGSGEVTEPIVKEKGLNSTPKQKNLKNIGVQKQKTTTGMDLVFSHESEKQSTAEVIDVGPPADWVKINVRETKDCFEIFALVPGLLREEVRVQSDPAGRLVIAGQPEQLDNPWGITPFKKVVNFPARIDPLHTSAVVSLHGRLFVRVPFEQ.

Residues 1–120 (MMADTEMQEQ…SSPHVPEESV (120 aa)) form a disordered region. 3 stretches are compositionally biased toward basic and acidic residues: residues 25 to 37 (ELEK…ERPK), 43 to 54 (DTTHTLDSDVHL), and 78 to 90 (RNGD…KKIT). Polar residues predominate over residues 92–102 (DGGQEETTLGE). Residues 142-233 (PQDQEAFIKE…ALLEYEKHLR (92 aa)) form the ARID domain. The interval 237 to 274 (ELNLPGSASLPSSGIEKEASSHQASGSGRTRRDAAARA) is disordered. The sHSP domain occupies 336–434 (AEVIDVGPPA…RLFVRVPFEQ (99 aa)).

It belongs to the small heat shock protein (HSP20) family.

The protein resides in the nucleus. This is AT-rich interactive domain-containing protein 5 (ARID5) from Arabidopsis thaliana (Mouse-ear cress).